The chain runs to 1390 residues: Bromodomain adjacent to zinc finger domain protein 2 (1390 aa).

Disordered regions lie at residues 30-67 (AKIQ…QNEA), 178-215 (AKKK…AANN), and 235-269 (QKQQ…DVKN). Positions 35 to 45 (ATASSPSKSTN) are enriched in polar residues. Composition is skewed to low complexity over residues 46 to 63 (GTSA…TSSS) and 186 to 215 (ASTS…AANN). Over residues 243–269 (DTQKKADQAKKAKELAKQQQKEQDVKN) the composition is skewed to basic and acidic residues. An MBD domain is found at 323 to 395 (KTNEAMLRLP…DNFLFNTKLV (73 aa)). One can recognise a DDT domain in the interval 524–588 (SQGFADALMV…LRLALEFPGM (65 aa)). Residues 705–724 (KEEQNHESDSEPPTRPDTPK) are compositionally biased toward basic and acidic residues. The disordered stretch occupies residues 705 to 729 (KEEQNHESDSEPPTRPDTPKKATVA). Residues 1100–1149 (EALCQICKSMDGDEMLVCDGCESGCHMECFRPRMTKVPEGDWFCQRCREE) form a PHD-type zinc finger. The disordered stretch occupies residues 1218–1241 (EERELEDDNHAENGENTKNGHMNG). The Bromo domain maps to 1273 to 1377 (LPKNMNKELC…KFFQKRWKQL (105 aa)).

This sequence belongs to the WAL family. In terms of assembly, interacts with set-6. In terms of tissue distribution, broadly expressed in the nervous system, including head, body and tail neurons.

It is found in the nucleus. It localises to the chromosome. Its function is as follows. Chromatin reader protein, involved in positively modulating the rate of age-related behavioral deterioration. Positively modulates the level of global trimethylated 'Lys-9' of histone H3 (H3K9me3), but not of H3K9me2 or H3K9me1. May repress the expression of mitochondrial function-related genes by occupying their promoter regions, working in concert with histone methyltransferase, set-6. Involved in modulation of the mitochondrial unfolded protein response (UPR). Negatively regulates expression of bas-1, a serotonin (5-HT) and dopamine synthesizing enzyme (DOPA decarboxylase), with aging. Negatively modulates levels of endogenous 5-HT and dopamine with aging. Involved in modulating longevity, probably as a result of enhanced stress resistance via mechanisms related to dietary restriction and mitochondrial function. This chain is Bromodomain adjacent to zinc finger domain protein 2, found in Caenorhabditis elegans.